The chain runs to 289 residues: Deoxyuridine 5'-triphosphate nucleotidohydrolase (289 aa).

Substrate is bound by residues 176 to 178 (RSG) and 283 to 284 (FG).

It belongs to the dUTPase family. It depends on Mg(2+) as a cofactor.

The catalysed reaction is dUTP + H2O = dUMP + diphosphate + H(+). In terms of biological role, involved in nucleotide metabolism: produces dUMP, the immediate precursor of thymidine nucleotides and decreases the intracellular concentration of dUTP to avoid uracil incorporation into viral DNA. The polypeptide is Deoxyuridine 5'-triphosphate nucleotidohydrolase (Equus caballus (Horse)).